The sequence spans 280 residues: Phosphonates import ATP-binding protein PhnC 1 (280 aa).

The ABC transporter domain maps to Phe3–Ser247. Position 36 to 43 (Gly36 to Thr43) interacts with ATP.

It belongs to the ABC transporter superfamily. Phosphonates importer (TC 3.A.1.9.1) family. As to quaternary structure, the complex is composed of two ATP-binding proteins (PhnC), two transmembrane proteins (PhnE) and a solute-binding protein (PhnD).

It is found in the cell inner membrane. The enzyme catalyses phosphonate(out) + ATP + H2O = phosphonate(in) + ADP + phosphate + H(+). In terms of biological role, part of the ABC transporter complex PhnCDE involved in phosphonates import. Responsible for energy coupling to the transport system. The chain is Phosphonates import ATP-binding protein PhnC 1 from Cupriavidus necator (strain ATCC 17699 / DSM 428 / KCTC 22496 / NCIMB 10442 / H16 / Stanier 337) (Ralstonia eutropha).